The primary structure comprises 277 residues: MKFTKMHGLGNDYIYVDAISQKIENPNEISKFVSDRHFGIGSDGLVLILPSDVADFKMRMFNSDGSEAEMCGNAIRCVGKFVYDKKMTDKSTISIETLAGIKVLEMTVENGKVVLVKVDMGEPILKAETIPVLSEKHPVIDEEITAKDYCYNFTCVSMGNPHAITYIENVEEFPLEKIGPLFEVHEKFPKKTNVEFVELIDDSTVKMRVWERGAGETLACGTGACAVLTASVLKGYVGRKATVKLLGGDLIIEWNEKDNHIYMTGPATTVFEGEIDI.

Residues N11 and N62 each contribute to the substrate site. The active-site Proton donor is C71. Substrate-binding positions include 72–73 (GN), N160, N193, and 211–212 (ER). C220 acts as the Proton acceptor in catalysis. A substrate-binding site is contributed by 221-222 (GT).

This sequence belongs to the diaminopimelate epimerase family. In terms of assembly, homodimer.

The protein localises to the cytoplasm. The enzyme catalyses (2S,6S)-2,6-diaminopimelate = meso-2,6-diaminopimelate. Its pathway is amino-acid biosynthesis; L-lysine biosynthesis via DAP pathway; DL-2,6-diaminopimelate from LL-2,6-diaminopimelate: step 1/1. Catalyzes the stereoinversion of LL-2,6-diaminopimelate (L,L-DAP) to meso-diaminopimelate (meso-DAP), a precursor of L-lysine. The sequence is that of Diaminopimelate epimerase from Methanococcus maripaludis (strain C5 / ATCC BAA-1333).